Here is a 388-residue protein sequence, read N- to C-terminus: S-adenosylmethionine synthase (388 aa).

Histidine 16 serves as a coordination point for ATP. A Mg(2+)-binding site is contributed by aspartate 18. K(+) is bound at residue glutamate 44. L-methionine-binding residues include glutamate 57 and glutamine 100. The tract at residues 100-110 (QSPDIAQGVNE) is flexible loop. Residues 167–169 (DGK), 233–234 (RF), aspartate 242, 248–249 (RK), and lysine 269 contribute to the ATP site. Aspartate 242 contacts L-methionine. L-methionine is bound at residue lysine 273.

The protein belongs to the AdoMet synthase family. Homotetramer; dimer of dimers. Mg(2+) serves as cofactor. Requires K(+) as cofactor.

It localises to the cytoplasm. It carries out the reaction L-methionine + ATP + H2O = S-adenosyl-L-methionine + phosphate + diphosphate. The protein operates within amino-acid biosynthesis; S-adenosyl-L-methionine biosynthesis; S-adenosyl-L-methionine from L-methionine: step 1/1. Catalyzes the formation of S-adenosylmethionine (AdoMet) from methionine and ATP. The overall synthetic reaction is composed of two sequential steps, AdoMet formation and the subsequent tripolyphosphate hydrolysis which occurs prior to release of AdoMet from the enzyme. This chain is S-adenosylmethionine synthase, found in Desulfosudis oleivorans (strain DSM 6200 / JCM 39069 / Hxd3) (Desulfococcus oleovorans).